The following is a 356-amino-acid chain: MTQMEYIPIISDSTSSFKSYDPFPLELGGELPELKIAYRTWGTLNAQKSNVILVCHALTGNADADSWWRGMFGEGKAFDETKDFIICSNVIGSCYGSTGPLSLNPKSGKRYGPDFPRITIRDMVAAQRLLLQSFGIEKIKLVIGASLGGMQVLEWGAMYPEMAGALMPMGISGRHSAWCIAQSEAQRQAIAADAEWQGGWYDPAQQPRKGLAAARMMAMCTYRCFENYEERFGREQREDGLFEAESYMRHQGDKLVGRFDANTYITLTRAMDMHDLGRGRESYEAALGAFTMPVEILSIDSDILYPKQEQEELARLIPGSRLLFLDEPYGHDAFLIDTDTVSRMACEFKRQLIVDN.

The region spanning Asn-50–Leu-335 is the AB hydrolase-1 domain. Catalysis depends on Ser-146, which acts as the Nucleophile. Arg-215 contacts substrate. Residues Asp-302 and His-331 contribute to the active site. Position 332 (Asp-332) interacts with substrate.

This sequence belongs to the AB hydrolase superfamily. MetX family. As to quaternary structure, homodimer.

It is found in the cytoplasm. It catalyses the reaction L-homoserine + acetyl-CoA = O-acetyl-L-homoserine + CoA. It functions in the pathway amino-acid biosynthesis; L-methionine biosynthesis via de novo pathway; O-acetyl-L-homoserine from L-homoserine: step 1/1. Transfers an acetyl group from acetyl-CoA to L-homoserine, forming acetyl-L-homoserine. This is Homoserine O-acetyltransferase from Chlorobaculum parvum (strain DSM 263 / NCIMB 8327) (Chlorobium vibrioforme subsp. thiosulfatophilum).